Here is a 344-residue protein sequence, read N- to C-terminus: Arginine N-succinyltransferase (344 aa).

Residue Leu125 coordinates succinyl-CoA. The active-site Proton donor is His229.

This sequence belongs to the arginine N-succinyltransferase family.

It carries out the reaction succinyl-CoA + L-arginine = N(2)-succinyl-L-arginine + CoA + H(+). It functions in the pathway amino-acid degradation; L-arginine degradation via AST pathway; L-glutamate and succinate from L-arginine: step 1/5. In terms of biological role, catalyzes the transfer of succinyl-CoA to arginine to produce N(2)-succinylarginine. In Escherichia coli O127:H6 (strain E2348/69 / EPEC), this protein is Arginine N-succinyltransferase.